Here is a 455-residue protein sequence, read N- to C-terminus: Transcription factor mokH (455 aa).

The disordered stretch occupies residues 1-22 (MALSPVQDPPSHTDKTMPRRAF). The segment at residues 26–58 (CDRCHAQKIKCIGSEGAVARASCQRCQQAGLRC) is a DNA-binding region (zn(2)-C6 fungal-type). Disordered regions lie at residues 68-113 (KLPK…DSSG) and 296-317 (LTPL…RSSV). The segment covering 75–88 (AESSPASSTAGLHT) has biased composition (polar residues). Over residues 89–113 (SSSDSSPPVPSDGLPLDLPGPDSSG) the composition is skewed to low complexity.

It localises to the nucleus. Transcription factor that regulates the gene cluster that mediates the biosynthesis of monakolin K, also known as lovastatin, and which acts as a potent competitive inhibitor of HMG-CoA reductase. Monakolin K biosynthesis is performed in two stages. The first stage is catalyzed by the nonaketide synthase mokA, which belongs to type I polyketide synthases and catalyzes the iterative nine-step formation of the polyketide. This PKS stage is completed by the action of dehydrogenase mokE, which catalyzes the NADPH-dependent reduction of the unsaturated tetra-, penta- and heptaketide intermediates that arise during the mokA-mediated biosynthesis of the nonaketide chain and leads to dihydromonacolin L. Covalently bound dihydromonacolin L is released from mokA by the mokD esterase. Conversion of dihydromonacolin L into monacolin L and then monacolin J is subsequently performed with the participation of molecular oxygen and P450 monoogygenase mokC. Finally, mokF performs the conversion of monacoline J to monacoline K through the addition of the side-chain diketide moiety (2R)-2-methylbutanoate produced by the diketide synthase mokB. HMG-CoA reductase mokG may act as a down-regulator of monacolin K production. The chain is Transcription factor mokH from Monascus pilosus (Red mold).